Consider the following 1177-residue polypeptide: Solute carrier family 9 member C1 (1177 aa).

The Extracellular segment spans residues 1–17 (MAGIFKEFFFSTEDLPE). Residues 18–37 (VILTLSLISSIGAFLNRHLE) traverse the membrane as a helical segment. Residues 38 to 42 (DFPIP) lie on the Cytoplasmic side of the membrane. Residues 43–60 (VPVILFLLGCSFEVLSFT) traverse the membrane as a helical segment. The Extracellular portion of the chain corresponds to 61–76 (SSQVQRYANAIQWMSP). Residues 77–93 (DLFFRIFTPVVFFTTAF) traverse the membrane as a helical segment. Over 94–103 (DMDTYMLQKL) the chain is Cytoplasmic. Residues 104 to 129 (FWQILLISIPGFLVNYILVLWHLASV) form a helical membrane-spanning segment. The tract at residues 104–191 (FWQILLISIP…SLITFTSIMD (88 aa)) is transport core domain. The Extracellular portion of the chain corresponds to 130–135 (NQLLLK). The chain crosses the membrane as a helical span at residues 136 to 161 (PTQWLLFSAILVSSDPMLTAAAIRDL). Residues 162–164 (GLS) lie on the Cytoplasmic side of the membrane. A helical membrane pass occupies residues 165–190 (RSLISLINGESLMTSVISLITFTSIM). Residues 191–204 (DFDQRLQSKRNHTL) lie on the Extracellular side of the membrane. A helical membrane pass occupies residues 205 to 236 (AEEIVGGICSYIIASFLFGILSSKLIQFWMST). Topologically, residues 237 to 240 (VFGD) are cytoplasmic. The helical transmembrane segment at 241-262 (DVNHISLIFSILYLIFYICELV) threads the bilayer. Topologically, residues 263–265 (GMS) are extracellular. A helical transmembrane segment spans residues 266–279 (GIFTLAIVGLLLNS). Residues 280-286 (TSFKAAI) are Cytoplasmic-facing. A helical membrane pass occupies residues 287 to 319 (EETLLLEFWTFLSRIAFLMVFTFFGLLIPAHTY). At 320–324 (LYIEF) the chain is on the extracellular side. A helical membrane pass occupies residues 325 to 354 (VDIYYSLNIYLTLIVLRFLTLLLISPVLSR). The transport core domain stretch occupies residues 325 to 426 (VDIYYSLNIY…FILPVAVTIL (102 aa)). Over 355–360 (VGHEFS) the chain is Cytoplasmic. A helical membrane pass occupies residues 361 to 391 (WRWIFIMVCSEMKGMPNINMALLLAYSDLYF). Over 392 to 395 (GSDK) the chain is Extracellular. Residues 396–426 (EKSQILFHGVLVCLITLVVNRFILPVAVTIL) form a helical membrane-spanning segment. Topologically, residues 427–612 (GLRDATSTKY…ICHTIVFTEE (186 aa)) are cytoplasmic. Residues 598 to 678 (YFFFRICHTI…DFFSHAWNIF (81 aa)) form an ion transport-like region. The chain crosses the membrane as a helical span at residues 613–633 (FEHVGYLVILMNIFPFIISWI). The Extracellular portion of the chain corresponds to 634-637 (SQLN). Residues 638–664 (VIYHSELKHTNYCFLTLYILEALLKIA) form a helical membrane-spanning segment. At 665-671 (AMRKDFF) the chain is on the cytoplasmic side. Residues 672–696 (SHAWNIFELAITLIGILHVILIEID) traverse the membrane as a helical segment. Residues 697-704 (TIKYIFNE) lie on the Extracellular side of the membrane. The chain crosses the membrane as a helical span at residues 705–731 (TEVIVFIKVVQFFRILRIFKLIAPKLL). Residues 732-1177 (QIIDKRMSHQ…RINLRKVRKE (446 aa)) lie on the Cytoplasmic side of the membrane.

Belongs to the monovalent cation:proton antiporter 1 (CPA1) transporter (TC 2.A.36) family. As to quaternary structure, interacts with soluble adenylyl cyclase (sAC). As to expression, sperm.

It is found in the cell projection. Its subcellular location is the cilium. The protein resides in the flagellum membrane. Its function is as follows. Sperm-specific solute carrier involved in intracellular pH regulation of spermatozoa. Required for sperm motility and fertility. Involved in sperm cell hyperactivation, a step needed for sperm motility which is essential late in the preparation of sperm for fertilization. Required for the expression and bicarbonate regulation of the soluble adenylyl cyclase (sAC). This Homo sapiens (Human) protein is Solute carrier family 9 member C1 (SLC9C1).